The following is a 102-amino-acid chain: Small ribosomal subunit protein eS24 (102 aa).

This sequence belongs to the eukaryotic ribosomal protein eS24 family.

This Methanococcoides burtonii (strain DSM 6242 / NBRC 107633 / OCM 468 / ACE-M) protein is Small ribosomal subunit protein eS24.